The following is a 547-amino-acid chain: EFKVNGEPVVLHLEKNKGLFSEDYSETHYSPDGRQITTYPPVEDHCYYHGRIENDADSTASISACNGLKGHFKLQGETYLIEPLKLSDSEAHAVYKYENVEKEDEAPKMCGVTETNWEYEEPIKKASKLVVTAEQQKFPYRYVEIVVVVDRRMVTKYNGDLKKIRKWVYELVNIVNNIYRSLNVHVALVGLEIWSKGDKITVQPDSDYTLNSFGEWRERDLLPRKKHDNAQLLTAVVFDGPTIGRAYIAGMCDPRHSVGVVMDHSKENLQVAVTMAHELGHNLGMEHDENQCHCDAPSCVMASVLSVVLSYEFSDCSQNQYQTYLTKHNPQCILNEPLLTVSGNELLEAGEECDCGAPENPCCDAATCKLRPGAQCAEGLCCDQCRFKGAGKICRRARGDNPDDRCTGQSADCPRNRFHRNGQPCLYNHGYCYNGKCPIMFYQCYFLFGSNATVAEDDCFNNNKKGDKYFYCRKENEKYIPCAQEDVKCGRLFCDNKKYPCHYNYSEDLDFGMVDHGTKCADGKVCSNRQCVDVNEAYKSTTVFSLI.

A propeptide spanning residues 1–133 is cleaved from the precursor; it reads EFKVNGEPVV…KKASKLVVTA (133 aa). Residues 141–337 enclose the Peptidase M12B domain; it reads RYVEIVVVVD…HNPQCILNEP (197 aa). E144 and D228 together coordinate Ca(2+). Disulfide bonds link C252–C332, C292–C316, and C294–C299. H277 contacts Zn(2+). The active site involves E278. 2 residues coordinate Zn(2+): H281 and H287. 8 residues coordinate Ca(2+): C332, N335, V341, N344, L346, E348, E351, and D354. Residues 339–421 form the Disintegrin domain; sequence LTVSGNELLE…DCPRNRFHRN (83 aa). 11 disulfides stabilise this stretch: C353-C363, C362-C385, C376-C382, C381-C406, C394-C413, C425-C437, C444-C494, C459-C501, C472-C482, C489-C526, and C520-C531. N451 carries an N-linked (GlcNAc...) asparagine glycan. N504 carries N-linked (GlcNAc...) asparagine glycosylation.

Belongs to the venom metalloproteinase (M12B) family. P-III subfamily. P-IIIa sub-subfamily. As to quaternary structure, monomer. Zn(2+) serves as cofactor. In terms of tissue distribution, expressed by the venom gland.

Its subcellular location is the secreted. With respect to regulation, completely inhibited by EDTA, EGTA, 1,10-phenanthroline, and partially by beta-mercaptoethanol. Is not inhibited by aprotinin and leupeptin. Functionally, this protein is a zinc metalloprotease from snake venom that causes hemorrhage in mice after intradermal injection. It inhibits platelet aggregation induced by collagen and ADP. Has moderate edema activity, but no myotoxic activity. It hydrolyzes the Aalpha-chain and more slowly the Bbeta-chain of fibrinogen, without affecting the gamma-chains. It also shows proteolytic activity on casein. It is unable to clot plasma. It also shows bactericidal activity against E.coli and S.aureus. This is Zinc metalloproteinase-disintegrin-like BjussuMP-1 from Bothrops jararacussu (Jararacussu).